Reading from the N-terminus, the 265-residue chain is MVLGLFDSGLGGLTVLREIARRLPAQPVIYFADTARLPYGSRTPAEICRYVREILHWFEQQGVQRVLMACNTSSALALPVVASEYALKVGGLIAPAARAAARRGRRIGVIATAATVQSHAYTRAIQALTPRAQVWEVACPEFVPLVEGGRLLGEEVRSVARRYLAPLVEQRIDTLVYGCTHYPYLAPVIGDLLPASVRCVDPAVAAVAELAAALPPSRRLETRAACHFFVSGDPVRFAQAAYPWLDYYPQVQAVALPPLPAAQTN.

Residues 7-8 (DS) and 39-40 (YG) each bind substrate. Cys70 functions as the Proton donor/acceptor in the catalytic mechanism. 71 to 72 (NT) provides a ligand contact to substrate. Cys179 (proton donor/acceptor) is an active-site residue. 180-181 (TH) provides a ligand contact to substrate.

The protein belongs to the aspartate/glutamate racemases family.

The enzyme catalyses L-glutamate = D-glutamate. It participates in cell wall biogenesis; peptidoglycan biosynthesis. In terms of biological role, provides the (R)-glutamate required for cell wall biosynthesis. This chain is Glutamate racemase, found in Gloeobacter violaceus (strain ATCC 29082 / PCC 7421).